The following is a 102-amino-acid chain: NADH-quinone oxidoreductase subunit K (102 aa).

Helical transmembrane passes span 6–26 (LIAM…GVLA), 30–50 (IMFQ…GFVA), and 63–83 (MFIL…ALFL).

It belongs to the complex I subunit 4L family. In terms of assembly, NDH-1 is composed of 14 different subunits. Subunits NuoA, H, J, K, L, M, N constitute the membrane sector of the complex.

It localises to the cell inner membrane. It catalyses the reaction a quinone + NADH + 5 H(+)(in) = a quinol + NAD(+) + 4 H(+)(out). Its function is as follows. NDH-1 shuttles electrons from NADH, via FMN and iron-sulfur (Fe-S) centers, to quinones in the respiratory chain. The immediate electron acceptor for the enzyme in this species is believed to be ubiquinone. Couples the redox reaction to proton translocation (for every two electrons transferred, four hydrogen ions are translocated across the cytoplasmic membrane), and thus conserves the redox energy in a proton gradient. The chain is NADH-quinone oxidoreductase subunit K from Rhodopseudomonas palustris (strain BisB5).